The sequence spans 150 residues: Transcriptional regulator MraZ (150 aa).

2 consecutive SpoVT-AbrB domains span residues 8–55 (FINN…GISH) and 84–127 (AVQL…QPQN).

The protein belongs to the MraZ family. As to quaternary structure, forms oligomers.

The protein localises to the cytoplasm. Its subcellular location is the nucleoid. This chain is Transcriptional regulator MraZ, found in Rickettsia bellii (strain OSU 85-389).